A 179-amino-acid chain; its full sequence is Large ribosomal subunit protein uL5 (179 aa).

It belongs to the universal ribosomal protein uL5 family. As to quaternary structure, part of the 50S ribosomal subunit; part of the 5S rRNA/L5/L18/L25 subcomplex. Contacts the 5S rRNA and the P site tRNA. Forms a bridge to the 30S subunit in the 70S ribosome.

In terms of biological role, this is one of the proteins that bind and probably mediate the attachment of the 5S RNA into the large ribosomal subunit, where it forms part of the central protuberance. In the 70S ribosome it contacts protein S13 of the 30S subunit (bridge B1b), connecting the 2 subunits; this bridge is implicated in subunit movement. Contacts the P site tRNA; the 5S rRNA and some of its associated proteins might help stabilize positioning of ribosome-bound tRNAs. The sequence is that of Large ribosomal subunit protein uL5 from Prochlorococcus marinus (strain NATL2A).